The primary structure comprises 627 residues: Carene synthase 3, chloroplastic (627 aa).

Residues 1 to 36 (MSVISIVPLASKSCLYKSLMSSTHELKALCRPIATL) constitute a chloroplast transit peptide. Residues D378, D382, and D530 each contribute to the Mg(2+) site. The DDXXD motif motif lies at 378-382 (DDMYD).

Belongs to the terpene synthase family. Tpsd subfamily. The cofactor is Mg(2+). Mn(2+) is required as a cofactor.

The protein resides in the plastid. The protein localises to the chloroplast. It catalyses the reaction (2E)-geranyl diphosphate = (+)-car-3-ene + diphosphate. It functions in the pathway terpene metabolism; oleoresin biosynthesis. Functionally, terpene synthase (TPS) involved in defensive oleoresin formation in conifers in response to insect attack or other injury. The polypeptide is Carene synthase 3, chloroplastic (TPS-3car3) (Picea sitchensis (Sitka spruce)).